A 122-amino-acid polypeptide reads, in one-letter code: Large ribosomal subunit protein uL14 (122 aa).

Belongs to the universal ribosomal protein uL14 family. In terms of assembly, part of the 50S ribosomal subunit. Forms a cluster with proteins L3 and L19. In the 70S ribosome, L14 and L19 interact and together make contacts with the 16S rRNA in bridges B5 and B8.

Functionally, binds to 23S rRNA. Forms part of two intersubunit bridges in the 70S ribosome. This Heliobacterium modesticaldum (strain ATCC 51547 / Ice1) protein is Large ribosomal subunit protein uL14.